Reading from the N-terminus, the 232-residue chain is uncharacterized protein (232 aa).

Positions 1-71 (MSNPTIEGDE…KENERIKNDD (71 aa)) are disordered. A compositionally biased stretch (acidic residues) spans 25-38 (DDLDDLDDILDDLD). The segment covering 44–71 (KNEEKKNIDEHKQTGNTSKENERIKNDD) has biased composition (basic and acidic residues).

This is an uncharacterized protein from Schizosaccharomyces pombe (strain 972 / ATCC 24843) (Fission yeast).